The following is a 535-amino-acid chain: Probable histone-arginine methyltransferase 1.3 (535 aa).

Residue Met1 is modified to N-acetylmethionine. Residues 141–456 enclose the SAM-dependent MTase PRMT-type domain; sequence EASSAKMYFH…QSYTIDLTLS (316 aa). S-adenosyl-L-methionine is bound by residues Gln158, Arg167, Gly191, Glu213, and Glu243. Catalysis depends on residues Glu257 and Glu266. S-adenosyl-L-methionine is bound at residue Ser271. The interval 494–517 is disordered; it reads VAQEPPLQPQPELSTQQDIQTPND. The segment covering 507 to 516 has biased composition (polar residues); the sequence is STQQDIQTPN.

Belongs to the class I-like SAM-binding methyltransferase superfamily. Protein arginine N-methyltransferase family. In terms of assembly, interacts with PQT3 in the nucleus. Ubiquitinated by PQT3.

Its subcellular location is the nucleus. It localises to the cytoplasm. The enzyme catalyses L-arginyl-[protein] + 2 S-adenosyl-L-methionine = N(omega),N(omega)-dimethyl-L-arginyl-[protein] + 2 S-adenosyl-L-homocysteine + 2 H(+). Functionally, methylates (mono- and asymmetric dimethylation) the guanidino nitrogens of arginyl residues in several proteins involved in DNA packaging, transcription regulation, and mRNA stability. Recruited to promoters upon gene activation, methylates histone H3 and activates transcription via chromatin remodeling. Positive regulator in the oxidative stress tolerance that promotes the expression of enzymes preventing oxidative stress such as APX1 and GPX1 by histone methylation (H3R17me2a). Confers tolerance to cadmium CdCl(2) and salt NaCl stresses. The polypeptide is Probable histone-arginine methyltransferase 1.3 (PRMT13) (Arabidopsis thaliana (Mouse-ear cress)).